An 81-amino-acid chain; its full sequence is Small ribosomal subunit protein uS17 (81 aa).

Belongs to the universal ribosomal protein uS17 family. As to quaternary structure, part of the 30S ribosomal subunit.

In terms of biological role, one of the primary rRNA binding proteins, it binds specifically to the 5'-end of 16S ribosomal RNA. This is Small ribosomal subunit protein uS17 from Trichormus variabilis (strain ATCC 29413 / PCC 7937) (Anabaena variabilis).